Here is a 202-residue protein sequence, read N- to C-terminus: Holliday junction branch migration complex subunit RuvA (202 aa).

The interval 1-65 (MIAYVEGRVA…EDALELFGFS (65 aa)) is domain I. The domain II stretch occupies residues 66 to 144 (TWDERQTFMV…VEDLPAGLVL (79 aa)). Positions 145 to 155 (AGGAAPGGVFR) are flexible linker. Positions 155-202 (RDALAGLGNLGYLEDEAAPVLKEVLKAEPDLDVAGALRAALKALARGR) are domain III.

The protein belongs to the RuvA family. Homotetramer. Forms an RuvA(8)-RuvB(12)-Holliday junction (HJ) complex. HJ DNA is sandwiched between 2 RuvA tetramers; dsDNA enters through RuvA and exits via RuvB. An RuvB hexamer assembles on each DNA strand where it exits the tetramer. Each RuvB hexamer is contacted by two RuvA subunits (via domain III) on 2 adjacent RuvB subunits; this complex drives branch migration. In the full resolvosome a probable DNA-RuvA(4)-RuvB(12)-RuvC(2) complex forms which resolves the HJ.

It localises to the cytoplasm. Functionally, the RuvA-RuvB-RuvC complex processes Holliday junction (HJ) DNA during genetic recombination and DNA repair, while the RuvA-RuvB complex plays an important role in the rescue of blocked DNA replication forks via replication fork reversal (RFR). RuvA specifically binds to HJ cruciform DNA, conferring on it an open structure. The RuvB hexamer acts as an ATP-dependent pump, pulling dsDNA into and through the RuvAB complex. HJ branch migration allows RuvC to scan DNA until it finds its consensus sequence, where it cleaves and resolves the cruciform DNA. This is Holliday junction branch migration complex subunit RuvA from Nitratidesulfovibrio vulgaris (strain DSM 19637 / Miyazaki F) (Desulfovibrio vulgaris).